The chain runs to 240 residues: 6-phosphogluconolactonase (240 aa).

This sequence belongs to the glucosamine/galactosamine-6-phosphate isomerase family. 6-phosphogluconolactonase subfamily.

It catalyses the reaction 6-phospho-D-glucono-1,5-lactone + H2O = 6-phospho-D-gluconate + H(+). It functions in the pathway carbohydrate degradation; pentose phosphate pathway; D-ribulose 5-phosphate from D-glucose 6-phosphate (oxidative stage): step 2/3. Functionally, hydrolysis of 6-phosphogluconolactone to 6-phosphogluconate. This is 6-phosphogluconolactonase (pgl) from Synechocystis sp. (strain ATCC 27184 / PCC 6803 / Kazusa).